The following is a 442-amino-acid chain: tRNA modification GTPase MnmE (442 aa).

(6S)-5-formyl-5,6,7,8-tetrahydrofolate-binding residues include arginine 27, glutamate 84, and lysine 124. The region spanning 221-366 (GLHVVIVGAP…LLTNLQNFAE (146 aa)) is the TrmE-type G domain. GTP is bound by residues 231–236 (NAGKSS), 250–256 (SEEAGTT), and 275–278 (DTAG). Mg(2+)-binding residues include serine 235 and threonine 256. Residue lysine 442 coordinates (6S)-5-formyl-5,6,7,8-tetrahydrofolate.

Belongs to the TRAFAC class TrmE-Era-EngA-EngB-Septin-like GTPase superfamily. TrmE GTPase family. As to quaternary structure, homodimer. Heterotetramer of two MnmE and two MnmG subunits. It depends on K(+) as a cofactor.

It localises to the cytoplasm. Its function is as follows. Exhibits a very high intrinsic GTPase hydrolysis rate. Involved in the addition of a carboxymethylaminomethyl (cmnm) group at the wobble position (U34) of certain tRNAs, forming tRNA-cmnm(5)s(2)U34. The chain is tRNA modification GTPase MnmE from Brucella anthropi (strain ATCC 49188 / DSM 6882 / CCUG 24695 / JCM 21032 / LMG 3331 / NBRC 15819 / NCTC 12168 / Alc 37) (Ochrobactrum anthropi).